We begin with the raw amino-acid sequence, 132 residues long: Small ribosomal subunit protein uS11 (132 aa).

This sequence belongs to the universal ribosomal protein uS11 family. Part of the 30S ribosomal subunit. Interacts with proteins S7 and S18. Binds to IF-3.

In terms of biological role, located on the platform of the 30S subunit, it bridges several disparate RNA helices of the 16S rRNA. Forms part of the Shine-Dalgarno cleft in the 70S ribosome. In Chlamydia abortus (strain DSM 27085 / S26/3) (Chlamydophila abortus), this protein is Small ribosomal subunit protein uS11.